We begin with the raw amino-acid sequence, 287 residues long: 3-hydroxyanthranilate 3,4-dioxygenase (287 aa).

The segment at 1–163 is domain A (catalytic); that stretch reads MTNQSLHVNI…SKENETGKPD (163 aa). Arg-46 contacts O2. Fe cation-binding residues include His-50, Glu-56, and His-94. Residue Glu-56 coordinates substrate. Arg-98 and Glu-108 together coordinate substrate. Residues 164 to 180 are linker; that stretch reads PANPIKPAPYPLNTMNV. The domain B stretch occupies residues 181-287; it reads MTPFSFREWV…AQDPDRKRPY (107 aa).

Belongs to the 3-HAO family. As to quaternary structure, monomer. Fe(2+) is required as a cofactor.

The protein resides in the cytoplasm. Its subcellular location is the cytosol. It catalyses the reaction 3-hydroxyanthranilate + O2 = (2Z,4Z)-2-amino-3-carboxymuconate 6-semialdehyde. It functions in the pathway cofactor biosynthesis; NAD(+) biosynthesis; quinolinate from L-kynurenine: step 3/3. Catalyzes the oxidative ring opening of 3-hydroxyanthranilate to 2-amino-3-carboxymuconate semialdehyde, which spontaneously cyclizes to quinolinate. The protein is 3-hydroxyanthranilate 3,4-dioxygenase (haao) of Danio rerio (Zebrafish).